Consider the following 406-residue polypeptide: Probable endo-xylogalacturonan hydrolase A (406 aa).

Residues 1–18 (MLYYRNLALLSLLSLSSA) form the signal peptide. PbH1 repeat units follow at residues 183 to 213 (AKDV…DIGS), 214 to 235 (STHV…ALKP), 237 to 257 (CNYV…SVGS), and 299 to 320 (VKNV…QIQS). Asp228 acts as the Proton donor in catalysis. Residue Asn244 is glycosylated (N-linked (GlcNAc...) asparagine). His251 is a catalytic residue. A glycan (N-linked (GlcNAc...) asparagine) is linked at Asn301.

The protein belongs to the glycosyl hydrolase 28 family.

It is found in the secreted. In terms of biological role, pectinolytic enzyme involved in the degradation of xylogalacturonan (xga), a galacturonan backbone heavily substituted with xylose, and which is one important component of the hairy regions of pectin. Activity requires a galacturonic acid backbone substituted with xylose. This chain is Probable endo-xylogalacturonan hydrolase A (xghA), found in Neosartorya fischeri (strain ATCC 1020 / DSM 3700 / CBS 544.65 / FGSC A1164 / JCM 1740 / NRRL 181 / WB 181) (Aspergillus fischerianus).